The sequence spans 322 residues: Phosphatidylserine decarboxylase proenzyme (322 aa).

Active-site charge relay system; for autoendoproteolytic cleavage activity residues include Asp90, His147, and Ser254. Catalysis depends on Ser254, which acts as the Schiff-base intermediate with substrate; via pyruvic acid; for decarboxylase activity. Ser254 carries the post-translational modification Pyruvic acid (Ser); by autocatalysis. The tract at residues 294–322 is disordered; that stretch reads EAEPAPLPEEEINAEHDASPLVDDKKDES. A compositionally biased stretch (basic and acidic residues) spans 306–322; the sequence is NAEHDASPLVDDKKDES.

Belongs to the phosphatidylserine decarboxylase family. PSD-B subfamily. Prokaryotic type I sub-subfamily. As to quaternary structure, heterodimer of a large membrane-associated beta subunit and a small pyruvoyl-containing alpha subunit. Pyruvate is required as a cofactor. In terms of processing, is synthesized initially as an inactive proenzyme. Formation of the active enzyme involves a self-maturation process in which the active site pyruvoyl group is generated from an internal serine residue via an autocatalytic post-translational modification. Two non-identical subunits are generated from the proenzyme in this reaction, and the pyruvate is formed at the N-terminus of the alpha chain, which is derived from the carboxyl end of the proenzyme. The autoendoproteolytic cleavage occurs by a canonical serine protease mechanism, in which the side chain hydroxyl group of the serine supplies its oxygen atom to form the C-terminus of the beta chain, while the remainder of the serine residue undergoes an oxidative deamination to produce ammonia and the pyruvoyl prosthetic group on the alpha chain. During this reaction, the Ser that is part of the protease active site of the proenzyme becomes the pyruvoyl prosthetic group, which constitutes an essential element of the active site of the mature decarboxylase.

It is found in the cell membrane. It catalyses the reaction a 1,2-diacyl-sn-glycero-3-phospho-L-serine + H(+) = a 1,2-diacyl-sn-glycero-3-phosphoethanolamine + CO2. The protein operates within phospholipid metabolism; phosphatidylethanolamine biosynthesis; phosphatidylethanolamine from CDP-diacylglycerol: step 2/2. Its function is as follows. Catalyzes the formation of phosphatidylethanolamine (PtdEtn) from phosphatidylserine (PtdSer). This chain is Phosphatidylserine decarboxylase proenzyme, found in Citrobacter koseri (strain ATCC BAA-895 / CDC 4225-83 / SGSC4696).